The sequence spans 1413 residues: DNA-directed RNA polymerase subunit beta' (1413 aa).

Zn(2+) is bound by residues Cys-70, Cys-72, Cys-85, and Cys-88. The Mg(2+) site is built by Asp-460, Asp-462, and Asp-464. Zn(2+) is bound by residues Cys-819, Cys-893, Cys-900, and Cys-903. The segment at 1393–1413 is disordered; the sequence is EAFEFGTPETPAAEQTPHTNE.

It belongs to the RNA polymerase beta' chain family. As to quaternary structure, the RNAP catalytic core consists of 2 alpha, 1 beta, 1 beta' and 1 omega subunit. When a sigma factor is associated with the core the holoenzyme is formed, which can initiate transcription. It depends on Mg(2+) as a cofactor. Requires Zn(2+) as cofactor.

It carries out the reaction RNA(n) + a ribonucleoside 5'-triphosphate = RNA(n+1) + diphosphate. Functionally, DNA-dependent RNA polymerase catalyzes the transcription of DNA into RNA using the four ribonucleoside triphosphates as substrates. This is DNA-directed RNA polymerase subunit beta' from Paraburkholderia phymatum (strain DSM 17167 / CIP 108236 / LMG 21445 / STM815) (Burkholderia phymatum).